Reading from the N-terminus, the 261-residue chain is Potassium/proton antiporter CemA (261 aa).

3 helical membrane-spanning segments follow: residues 138–158 (IISH…YLIL), 184–204 (FLIL…GWEL), and 221–241 (IISG…KYWI).

The protein belongs to the CemA family.

Its subcellular location is the plastid. It localises to the chloroplast inner membrane. It carries out the reaction K(+)(in) + H(+)(out) = K(+)(out) + H(+)(in). Functionally, contributes to K(+)/H(+) antiport activity by supporting proton efflux to control proton extrusion and homeostasis in chloroplasts in a light-dependent manner to modulate photosynthesis. Prevents excessive induction of non-photochemical quenching (NPQ) under continuous-light conditions. Indirectly promotes efficient inorganic carbon uptake into chloroplasts. The protein is Potassium/proton antiporter CemA of Pinus koraiensis (Korean pine).